Here is a 172-residue protein sequence, read N- to C-terminus: 3-hydroxydecanoyl-[acyl-carrier-protein] dehydratase (172 aa).

His-71 is a catalytic residue.

This sequence belongs to the thioester dehydratase family. FabA subfamily. In terms of assembly, homodimer.

Its subcellular location is the cytoplasm. The enzyme catalyses a (3R)-hydroxyacyl-[ACP] = a (2E)-enoyl-[ACP] + H2O. It carries out the reaction (3R)-hydroxydecanoyl-[ACP] = (2E)-decenoyl-[ACP] + H2O. It catalyses the reaction (2E)-decenoyl-[ACP] = (3Z)-decenoyl-[ACP]. The protein operates within lipid metabolism; fatty acid biosynthesis. Necessary for the introduction of cis unsaturation into fatty acids. Catalyzes the dehydration of (3R)-3-hydroxydecanoyl-ACP to E-(2)-decenoyl-ACP and then its isomerization to Z-(3)-decenoyl-ACP. Can catalyze the dehydratase reaction for beta-hydroxyacyl-ACPs with saturated chain lengths up to 16:0, being most active on intermediate chain length. This is 3-hydroxydecanoyl-[acyl-carrier-protein] dehydratase from Vibrio cholerae serotype O1 (strain ATCC 39541 / Classical Ogawa 395 / O395).